Here is an 81-residue protein sequence, read N- to C-terminus: Putative truncated GMC-type inactive oxidoreductase R833 (81 aa).

Belongs to the GMC oxidoreductase family.

This chain is Putative truncated GMC-type inactive oxidoreductase R833, found in Acanthamoeba polyphaga mimivirus (APMV).